Reading from the N-terminus, the 353-residue chain is 3-isopropylmalate dehydrogenase (353 aa).

73-86 (GPQYDTLDRPLRPE) contacts NAD(+). Positions 93, 103, 131, and 220 each coordinate substrate. Mg(2+) contacts are provided by Asp-220, Asp-244, and Asp-248. Residue 278 to 290 (GSAPDIAGKNLAN) participates in NAD(+) binding.

The protein belongs to the isocitrate and isopropylmalate dehydrogenases family. LeuB type 1 subfamily. In terms of assembly, homodimer. Mg(2+) is required as a cofactor. Mn(2+) serves as cofactor.

The protein resides in the cytoplasm. It carries out the reaction (2R,3S)-3-isopropylmalate + NAD(+) = 4-methyl-2-oxopentanoate + CO2 + NADH. It participates in amino-acid biosynthesis; L-leucine biosynthesis; L-leucine from 3-methyl-2-oxobutanoate: step 3/4. Functionally, catalyzes the oxidation of 3-carboxy-2-hydroxy-4-methylpentanoate (3-isopropylmalate) to 3-carboxy-4-methyl-2-oxopentanoate. The product decarboxylates to 4-methyl-2 oxopentanoate. This is 3-isopropylmalate dehydrogenase from Thiobacillus denitrificans (strain ATCC 25259 / T1).